Here is a 522-residue protein sequence, read N- to C-terminus: Peptide chain release factor 3 (522 aa).

The 268-residue stretch at 9 to 276 (KKRRTFAIIS…SFVNLAPAPQ (268 aa)) folds into the tr-type G domain. Residues 18 to 25 (SHPDAGKT), 86 to 90 (DTPGH), and 140 to 143 (NKLD) each bind GTP.

It belongs to the TRAFAC class translation factor GTPase superfamily. Classic translation factor GTPase family. PrfC subfamily.

It is found in the cytoplasm. Its function is as follows. Increases the formation of ribosomal termination complexes and stimulates activities of RF-1 and RF-2. It binds guanine nucleotides and has strong preference for UGA stop codons. It may interact directly with the ribosome. The stimulation of RF-1 and RF-2 is significantly reduced by GTP and GDP, but not by GMP. In Lactobacillus johnsonii (strain CNCM I-12250 / La1 / NCC 533), this protein is Peptide chain release factor 3.